Here is a 426-residue protein sequence, read N- to C-terminus: 3-phosphoshikimate 1-carboxyvinyltransferase (426 aa).

Positions 21, 22, and 26 each coordinate 3-phosphoshikimate. Lysine 21 is a binding site for phosphoenolpyruvate. Residues glycine 93 and arginine 121 each coordinate phosphoenolpyruvate. The 3-phosphoshikimate site is built by serine 165, glutamine 167, aspartate 313, and lysine 340. Residue glutamine 167 coordinates phosphoenolpyruvate. The Proton acceptor role is filled by aspartate 313. 2 residues coordinate phosphoenolpyruvate: arginine 344 and arginine 386.

Belongs to the EPSP synthase family. As to quaternary structure, monomer.

It is found in the cytoplasm. It catalyses the reaction 3-phosphoshikimate + phosphoenolpyruvate = 5-O-(1-carboxyvinyl)-3-phosphoshikimate + phosphate. The protein operates within metabolic intermediate biosynthesis; chorismate biosynthesis; chorismate from D-erythrose 4-phosphate and phosphoenolpyruvate: step 6/7. In terms of biological role, catalyzes the transfer of the enolpyruvyl moiety of phosphoenolpyruvate (PEP) to the 5-hydroxyl of shikimate-3-phosphate (S3P) to produce enolpyruvyl shikimate-3-phosphate and inorganic phosphate. The chain is 3-phosphoshikimate 1-carboxyvinyltransferase from Solibacter usitatus (strain Ellin6076).